Reading from the N-terminus, the 859-residue chain is Envelope glycoprotein (859 aa).

A propeptide spanning residues M1–F6 is cleaved from the precursor. At Y7 to W614 the chain is on the extracellular side. N-linked (GlcNAc...) asparagine; by host glycans are attached at residues N40, N112, N141, N148, N186, N214, N233, N244, N340, N368, N399, N406, N411, and N422. The fusion peptide stretch occupies residues F446–T466. N-linked (GlcNAc...) asparagine; by host glycans are attached at residues N483 and N490. The segment at L498–T513 is immunosuppression. N-linked (GlcNAc...) asparagine; by host glycosylation is found at N550 and N557. 2 coiled-coil regions span residues I576–K624 and K663–Q699. The helical transmembrane segment at I615 to L635 threads the bilayer. Over L636–V859 the chain is Cytoplasmic.

In terms of assembly, the mature envelope protein (Env) consists of a trimer of SU-TM heterodimers attached by noncovalent interactions or by a labile interchain disulfide bond. Specific enzymatic cleavages in vivo yield mature proteins. Envelope glycoproteins are synthesized as an inactive precursor that is N-glycosylated and processed likely by host cell furin or by a furin-like protease in the Golgi to yield the mature SU and TM proteins. The cleavage site between SU and TM requires the minimal sequence [KR]-X-[KR]-R.

It is found in the virion membrane. It localises to the host cell membrane. In terms of biological role, the surface protein (SU) attaches the virus to the host cell by binding to its receptor. This interaction triggers the refolding of the transmembrane protein (TM) and is thought to activate its fusogenic potential by unmasking its fusion peptide. Fusion occurs at the host cell plasma membrane. The transmembrane protein (TM) acts as a class I viral fusion protein. Under the current model, the protein has at least 3 conformational states: pre-fusion native state, pre-hairpin intermediate state, and post-fusion hairpin state. During viral and target cell membrane fusion, the coiled coil regions (heptad repeats) assume a trimer-of-hairpins structure, positioning the fusion peptide in close proximity to the C-terminal region of the ectodomain. The formation of this structure appears to drive apposition and subsequent fusion of viral and target cell membranes. Membranes fusion leads to delivery of the nucleocapsid into the cytoplasm. This chain is Envelope glycoprotein (env), found in Equus asinus (Donkey).